The chain runs to 624 residues: ATP-dependent RNA helicase MRH4, mitochondrial (624 aa).

The transit peptide at 1–43 directs the protein to the mitochondrion; that stretch reads MSPVASTCLLCEMRTVVWGWQPAVPQPWHFVRFASSARLARRK. The segment at 41–120 is disordered; it reads RRKPARMALS…KDAADKKQDG (80 aa). The segment covering 86–119 has biased composition (basic and acidic residues); the sequence is RLPDRPIPRSDAELKRSSSDLNNKEKDAADKKQD. The Q motif signature appears at 151-184; the sequence is TSFDQFPLLPQVREAVYANAFPTLTEISPTPIQR. The Helicase ATP-binding domain maps to 212–427; sequence EEELFHFDQF…EKKFPEMKRL (216 aa). 225–232 serves as a coordination point for ATP; that stretch reads AETGTGKT. Residues 374–377 carry the DEAD box motif; sequence DEAD. Residues 438–624 enclose the Helicase C-terminal domain; sequence RVQLGVVDVD…EAMFRGQALI (187 aa).

It belongs to the DEAD box helicase family. MRH4 subfamily.

The protein localises to the mitochondrion. It catalyses the reaction ATP + H2O = ADP + phosphate + H(+). Functionally, ATP-binding RNA helicase involved in mitochondrial RNA metabolism. Required for maintenance of mitochondrial DNA. The polypeptide is ATP-dependent RNA helicase MRH4, mitochondrial (MRH4) (Ajellomyces capsulatus (strain NAm1 / WU24) (Darling's disease fungus)).